A 478-amino-acid chain; its full sequence is Serine/threonine-protein phosphatase 2A activator 1 (478 aa).

Residues 359 to 478 (DPSAIPPPSR…DITTKAPWAK (120 aa)) form a disordered region. Residues 396-419 (APWATASQSTPPPSTGTAAPWATS) show a composition bias toward low complexity.

The protein belongs to the PTPA-type PPIase family.

Its subcellular location is the cytoplasm. It localises to the nucleus. The enzyme catalyses [protein]-peptidylproline (omega=180) = [protein]-peptidylproline (omega=0). Functionally, PPIases accelerate the folding of proteins. It catalyzes the cis-trans isomerization of proline imidic peptide bonds in oligopeptides. Acts as a regulatory subunit for PP2A-like phosphatases modulating their activity or substrate specificity, probably by inducing a conformational change in the catalytic subunit, a direct target of the PPIase. Can reactivate inactive phosphatase PP2A-phosphatase methylesterase complexes (PP2Ai) in presence of ATP and Mg(2+) by dissociating the inactive form from the complex. The polypeptide is Serine/threonine-protein phosphatase 2A activator 1 (rrd1) (Aspergillus oryzae (strain ATCC 42149 / RIB 40) (Yellow koji mold)).